A 1067-amino-acid polypeptide reads, in one-letter code: MESVSQLVSNCASRGIPAQQFLNFYHELINEKYGASLNAGNEERESESRKQVFEDVSRELVQAFHSSEDAILLAEYMVHLLFINYDTYLSSALLPQVYSIQSETLLMHFHSLAASFIGKLEDKLIKEQMRQDLSTFILSSCLQCDMSTFNNQLFISIVKYLQALLTLIDDSIDIEMDKDNLKLAVTSLLTRTTKLNRILGKRIGREFETKLNLSLSAKLAMVNSPQIFSPSSGATRFAGTPGSTKPMDLALSATSSTSNKIQDLKLIRFYKNLWLNNKIHHFNTSDSQLLEKFSSINSRLSSSLAEEHLIQEQITDLIETTYTSFAQLVNNKLYHQTNTNFNLLERKYVHFITKRLPLIIKDFLPQNPSVIVNSLQNIDEKVKKAIKSYYSNKNDSPERNEDLFDDYSGNNFDIRHDFLKNLIMLNLRPPSVLNEFLREDQMVDVKTLKTDDSLVIVNSQGVQEKVSDVQEALKSLIADLDIENQYVANGNNYRFSPDNALLKLLMSFDTIAPTKQVEIANAFLQILQKATDTSDLKTLGKVLWILTSNVGHSTTSMLCCISPGPFINAVVKFLEKQQRNSTVSSSDEPDFDSLHSYVTYGMALSFVVFLKTTYDFDIEPFIQNFEESYTLKFLSSIEDISDIFVLQNESAEGSKLYLQNWLRDLFINGSISDSQMKNTNVKDLINLIPFIFKQSVIAVQAGVVSNILNLTSGFEYFLQPFLMPGLIKIMFWLEYYLHSLKNNNPPSQILSSCWELINILICPPSLDDDAKGLHFMILKLNCVRLLNVLYLFRNDESNSSQYGVYAAHESIDPKLEAVISKLEYIASISNIYDVDTKCYETTKEVYSHGTLFSNKIPVTNEHPIDIIMTNQLNSFWNLHSSTYYNYDYLLELIKLITPEKFLVDSIRTLTYKVAAYGIPGVQGKLNTSAIEQVANFLAYFMILHDVQTEEQRLALLNYIESGVIVSKETETKQEPETKLDDDFDMLFGEPFNNTLDETSLVFSQNEQPKSYSSSVFPVLHDTFGVVIAEMKKRYDTSKNNGLLSEAAYENATTFIRKYVENLKNSVV.

Belongs to the Mediator complex subunit 5 family. Component of the Mediator complex.

The protein resides in the nucleus. In terms of biological role, component of the Mediator complex, a coactivator involved in the regulated transcription of nearly all RNA polymerase II-dependent genes. Mediator functions as a bridge to convey information from gene-specific regulatory proteins to the basal RNA polymerase II transcription machinery. Mediator is recruited to promoters by direct interactions with regulatory proteins and serves as a scaffold for the assembly of a functional preinitiation complex with RNA polymerase II and the general transcription factors. This Kluyveromyces lactis (strain ATCC 8585 / CBS 2359 / DSM 70799 / NBRC 1267 / NRRL Y-1140 / WM37) (Yeast) protein is Mediator of RNA polymerase II transcription subunit 5 (NUT1).